The chain runs to 2885 residues: Chromodomain-helicase-DNA-binding protein 9 (2885 aa).

The segment at 173–195 (QCSSLHSQQSRSNLNPGQNSLGQ) is disordered. Residue lysine 197 forms a Glycyl lysine isopeptide (Lys-Gly) (interchain with G-Cter in SUMO2) linkage. 3 disordered regions span residues 242–263 (CSSH…CSVS), 283–347 (SLLQ…QGNY), and 479–677 (CLQR…QPLQ). 2 stretches are compositionally biased toward polar residues: residues 243 to 263 (SSHQ…CSVS) and 283 to 310 (SLLQ…NSFS). Residues 323-334 (LLNPTPSLNSNN) are compositionally biased toward low complexity. Polar residues-rich tracts occupy residues 335 to 347 (FQIL…QGNY) and 483 to 505 (QPPS…TQVR). The residue at position 498 (lysine 498) is an N6-acetyllysine. Basic and acidic residues-rich tracts occupy residues 507 to 526 (MSEK…EKAN) and 534 to 544 (ARAKERGERNI). Serine 549 carries the phosphoserine modification. A compositionally biased stretch (basic and acidic residues) spans 572–592 (KPKDRDNKKPKTYSKLKEKTK). Lysine 595 participates in a covalent cross-link: Glycyl lysine isopeptide (Lys-Gly) (interchain with G-Cter in SUMO2). At serine 610 the chain carries Phosphoserine. The segment covering 617–630 (AEQRSQHTFKEQHS) has biased composition (basic and acidic residues). Residues 631–643 (QKRRSNRQIKRKK) are compositionally biased toward basic residues. Residues 644 to 659 (YAEDAEGKQSEEEVKG) show a composition bias toward basic and acidic residues. 2 consecutive Chromo domains span residues 689 to 760 (AIVD…HFLA) and 772 to 838 (VEVD…HLDR). An LXXLL motif 1 motif is present at residues 867–871 (LNWLL). Residues 871–1045 (LFNWYNRRNC…FSLLHFLEPL (175 aa)) enclose the Helicase ATP-binding domain. An ATP-binding site is contributed by 884 to 891 (DEMGLGKT). The short motif at 996-999 (DEAH) is the DEAH box element. An LXXLL motif 2 motif is present at residues 1035–1039 (LFSLL). One can recognise a Helicase C-terminal domain in the interval 1185 to 1336 (LIDKLLPKMK…KAVLQSMSGR (152 aa)). Residues 1460–1484 (KDELAELSEAESEGEEKPKLRRPCD) are disordered. Residues 1464 to 1473 (AELSEAESEG) show a composition bias toward acidic residues. A phosphoserine mark is found at serine 1467 and serine 1471. Residues 1474 to 1484 (EEKPKLRRPCD) show a composition bias toward basic and acidic residues. Residues lysine 1587, lysine 1737, and lysine 1902 each participate in a glycyl lysine isopeptide (Lys-Gly) (interchain with G-Cter in SUMO2) cross-link. Serine 2025 carries the post-translational modification Phosphoserine. The LXXLL motif 3 signature appears at 2030–2034 (LPRLL). Residue lysine 2037 forms a Glycyl lysine isopeptide (Lys-Gly) (interchain with G-Cter in SUMO2) linkage. Positions 2046 to 2238 (VKSESLTEEP…TQDSFQANNG (193 aa)) are disordered. A phosphoserine mark is found at serine 2057 and serine 2058. A Glycyl lysine isopeptide (Lys-Gly) (interchain with G-Cter in SUMO2) cross-link involves residue lysine 2073. A phosphoserine mark is found at serine 2074 and serine 2078. Over residues 2083–2092 (VLSQATGDQK) the composition is skewed to polar residues. Positions 2093–2103 (SGGKSETDRRM) are enriched in basic and acidic residues. Residues 2127 to 2193 (SQSSSDSDSD…SSSSSSSSSS (67 aa)) show a composition bias toward low complexity. Residues 2201–2215 (DVQKREGTPHRKAYD) are compositionally biased toward basic and acidic residues. A compositionally biased stretch (polar residues) spans 2220–2238 (ASLSTTQDETQDSFQANNG). The interval 2331 to 2471 (QMSKVKKHVR…LSYPQPQRIP (141 aa)) is binds A/T-rich DNA. Residues lysine 2349, lysine 2355, and lysine 2360 each participate in a glycyl lysine isopeptide (Lys-Gly) (interchain with G-Cter in SUMO2) cross-link. An a.T hook-like region spans residues 2428-2435 (KKRRGRRR). Positions 2473 to 2494 (TESPVPVINLKDGTRLAGDDAP) are disordered. Over residues 2484-2494 (DGTRLAGDDAP) the composition is skewed to basic and acidic residues. Positions 2710–2714 (LPNLL) match the LXXLL motif 4 motif. The disordered stretch occupies residues 2724 to 2770 (AESGAEEKRGNDSKELEGKKERTESQSPENGGERCVPGSPSTSSTAA). The segment covering 2728 to 2747 (AEEKRGNDSKELEGKKERTE) has biased composition (basic and acidic residues). Residues 2782-2786 (LNPLL) carry the LXXLL motif 5 motif. A compositionally biased stretch (basic and acidic residues) spans 2818 to 2847 (KNKSDDLDSSKSVEIKEENSRVRDQEEKGG). The disordered stretch occupies residues 2818 to 2885 (KNKSDDLDSS…SEDSDSSNED (68 aa)). Lysine 2833 is covalently cross-linked (Glycyl lysine isopeptide (Lys-Gly) (interchain with G-Cter in SUMO2)). Residues 2864 to 2876 (RASSGSDSSSSSS) are compositionally biased toward low complexity.

The protein belongs to the SNF2/RAD54 helicase family. In terms of assembly, interacts with PPARA. Probably interacts with ESR1 and NR1I3. Post-translationally, phosphorylated on serine and tyrosine residues. In terms of tissue distribution, expressed in osteoprogenitor cells during development and in mature bone (at protein level).

The protein localises to the cytoplasm. It localises to the nucleus. The enzyme catalyses ATP + H2O = ADP + phosphate + H(+). Functionally, probable ATP-dependent chromatin-remodeling factor. Acts as a transcriptional coactivator for PPARA and possibly other nuclear receptors. Has DNA-dependent ATPase activity and binds to A/T-rich DNA. Associates with A/T-rich regulatory regions in promoters of genes that participate in the differentiation of progenitors during osteogenesis. This chain is Chromodomain-helicase-DNA-binding protein 9 (Chd9), found in Mus musculus (Mouse).